Reading from the N-terminus, the 271-residue chain is Thiazole synthase (271 aa).

The active-site Schiff-base intermediate with DXP is K95. 1-deoxy-D-xylulose 5-phosphate is bound by residues G156, 182 to 183 (AG), and 204 to 205 (NT).

It belongs to the ThiG family. As to quaternary structure, homotetramer. Forms heterodimers with either ThiH or ThiS.

It localises to the cytoplasm. The catalysed reaction is [ThiS sulfur-carrier protein]-C-terminal-Gly-aminoethanethioate + 2-iminoacetate + 1-deoxy-D-xylulose 5-phosphate = [ThiS sulfur-carrier protein]-C-terminal Gly-Gly + 2-[(2R,5Z)-2-carboxy-4-methylthiazol-5(2H)-ylidene]ethyl phosphate + 2 H2O + H(+). It functions in the pathway cofactor biosynthesis; thiamine diphosphate biosynthesis. In terms of biological role, catalyzes the rearrangement of 1-deoxy-D-xylulose 5-phosphate (DXP) to produce the thiazole phosphate moiety of thiamine. Sulfur is provided by the thiocarboxylate moiety of the carrier protein ThiS. In vitro, sulfur can be provided by H(2)S. This is Thiazole synthase from Yersinia pseudotuberculosis serotype O:3 (strain YPIII).